A 459-amino-acid chain; its full sequence is ATP-dependent protease ATPase subunit HslU (459 aa).

Residues V26, 68 to 73, D271, E337, and R409 contribute to the ATP site; that span reads GVGKTE.

It belongs to the ClpX chaperone family. HslU subfamily. A double ring-shaped homohexamer of HslV is capped on each side by a ring-shaped HslU homohexamer. The assembly of the HslU/HslV complex is dependent on binding of ATP.

The protein localises to the cytoplasm. In terms of biological role, ATPase subunit of a proteasome-like degradation complex; this subunit has chaperone activity. The binding of ATP and its subsequent hydrolysis by HslU are essential for unfolding of protein substrates subsequently hydrolyzed by HslV. HslU recognizes the N-terminal part of its protein substrates and unfolds these before they are guided to HslV for hydrolysis. The protein is ATP-dependent protease ATPase subunit HslU of Xylella fastidiosa (strain M23).